The primary structure comprises 131 residues: Small ribosomal subunit protein bS6 (131 aa).

Residues 96–131 are disordered; the sequence is VTEASPMAKAKDERDSRRGPAGDRSYDEANAEEIAE. Residues 104–122 show a composition bias toward basic and acidic residues; it reads KAKDERDSRRGPAGDRSYD.

The protein belongs to the bacterial ribosomal protein bS6 family.

Functionally, binds together with bS18 to 16S ribosomal RNA. The sequence is that of Small ribosomal subunit protein bS6 from Shewanella sp. (strain ANA-3).